Consider the following 282-residue polypeptide: Pantothenate synthetase (282 aa).

Residue 30 to 37 (MGGLHQGH) coordinates ATP. Residue His37 is the Proton donor of the active site. A (R)-pantoate-binding site is contributed by Gln61. Gln61 serves as a coordination point for beta-alanine. 146–149 (GQKD) contacts ATP. Position 152 (Gln152) interacts with (R)-pantoate. ATP contacts are provided by residues Ile175 and 183–186 (MSTR).

Belongs to the pantothenate synthetase family. As to quaternary structure, homodimer.

It is found in the cytoplasm. The catalysed reaction is (R)-pantoate + beta-alanine + ATP = (R)-pantothenate + AMP + diphosphate + H(+). Its pathway is cofactor biosynthesis; (R)-pantothenate biosynthesis; (R)-pantothenate from (R)-pantoate and beta-alanine: step 1/1. Catalyzes the condensation of pantoate with beta-alanine in an ATP-dependent reaction via a pantoyl-adenylate intermediate. This Vesicomyosocius okutanii subsp. Calyptogena okutanii (strain HA) protein is Pantothenate synthetase.